The sequence spans 146 residues: Hemoglobin subunit beta (146 aa).

Val-1 is modified (N-acetylvaline). One can recognise a Globin domain in the interval 2-146; the sequence is HLTDAEKAAI…VATALGHKYH (145 aa). Lys-59 is subject to N6-acetyllysine. Residue His-63 participates in heme b binding. Lys-82 is subject to N6-acetyllysine. His-92 contributes to the heme b binding site. An S-nitrosocysteine modification is found at Cys-93. Lys-144 carries the post-translational modification N6-acetyllysine.

It belongs to the globin family. In terms of assembly, heterotetramer of two alpha chains and two beta chains. In terms of tissue distribution, red blood cells.

Involved in oxygen transport from the lung to the various peripheral tissues. The protein is Hemoglobin subunit beta (HBB) of Ondatra zibethicus (Muskrat).